The following is a 230-amino-acid chain: MSSVTTPAPVYTWTADEAIKFLKEWNFSLGIILLFITVILQFGYTSRSMFVYVIKMIILWLMWPLTIILTIFNCVYALNNVYLGFSIVFTIVAIIMWIVYFVNSIRLFIRTGSWWSFNPETNNLMCIDMKGRMYVRPIIEDYHTLTVTIIRGHLYMQGIKLGTGYSLSDLPAYVTVAKVSHLLTYKRGFLDKIGDTSGFAVYVKSKVGNYRLPSTQKGSGMDTALLRNNI.

At 1 to 24 the chain is on the virion surface side; the sequence is MSSVTTPAPVYTWTADEAIKFLKE. Residues 25-45 traverse the membrane as a helical segment; it reads WNFSLGIILLFITVILQFGYT. The Intravirion portion of the chain corresponds to 46-55; that stretch reads SRSMFVYVIK. The chain crosses the membrane as a helical span at residues 56–76; the sequence is MIILWLMWPLTIILTIFNCVY. Residues 77 to 84 are Virion surface-facing; the sequence is ALNNVYLG. The helical transmembrane segment at 85–105 threads the bilayer; the sequence is FSIVFTIVAIIMWIVYFVNSI. Topologically, residues 106–228 are intravirion; sequence RLFIRTGSWW…SGMDTALLRN (123 aa).

It belongs to the betacoronaviruses M protein family. In terms of assembly, homomultimer. Interacts with envelope E protein in the budding compartment of the host cell, which is located between endoplasmic reticulum and the Golgi complex. Forms a complex with HE and S proteins. Interacts with nucleocapsid N protein. This interaction probably participates in RNA packaging into the virus.

The protein resides in the virion membrane. The protein localises to the host Golgi apparatus membrane. In terms of biological role, component of the viral envelope that plays a central role in virus morphogenesis and assembly via its interactions with other viral proteins. In Bos taurus (Bovine), this protein is Membrane protein.